The following is a 495-amino-acid chain: Potassium voltage-gated channel subfamily A member 1 (495 aa).

The disordered stretch occupies residues 1 to 30; it reads MTVMSGENADEASAAPGHPQDGSYPRQADH. Positions 1–128 are tetramerization domain; sequence MTVMSGENAD…FYELGEEAME (128 aa). Residues 1-164 are Cytoplasmic-facing; sequence MTVMSGENAD…LLFEYPESSG (164 aa). Serine 23 bears the Phosphoserine mark. A helical membrane pass occupies residues 165 to 186; it reads PARVIAIVSVMVILISIVIFCL. Over 187–220 the chain is Extracellular; sequence ETLPELKDDKDFTGTIHRIDNTTVIYTSNIFTDP. Asparagine 207 carries an N-linked (GlcNAc...) asparagine glycan. The helical transmembrane segment at 221 to 242 threads the bilayer; that stretch reads FFIVETLCIIWFSFELVVRFFA. Residue cysteine 243 is the site of S-palmitoyl cysteine attachment. Topologically, residues 243–253 are cytoplasmic; sequence CPSKTDFFKNI. The chain crosses the membrane as a helical span at residues 254–274; that stretch reads MNFIDIVAIIPYFITLGTEIA. The Extracellular portion of the chain corresponds to 275–287; the sequence is EQEGNQKGEQATS. A helical; Voltage-sensor transmembrane segment spans residues 288–308; sequence LAILRVIRLVRVFRIFKLSRH. Over 309 to 323 the chain is Cytoplasmic; it reads SKGLQILGQTLKASM. An S4-S5 linker region spans residues 310-323; it reads KGLQILGQTLKASM. Residue serine 322 is modified to Phosphoserine; by PKA. Residues 324–345 form a helical membrane-spanning segment; the sequence is RELGLLIFFLFIGVILFSSAVY. Topologically, residues 346–359 are extracellular; the sequence is FAEAEEAESHFSSI. The segment at residues 360-371 is an intramembrane region (helical); sequence PDAFWWAVVSMT. Positions 372-377 match the Selectivity filter motif; that stretch reads TVGYGD. An intramembrane segment occupies 372 to 379; the sequence is TVGYGDMY. The Extracellular segment spans residues 380–386; sequence PVTIGGK. A helical membrane pass occupies residues 387 to 415; that stretch reads IVGSLCAIAGVLTIALPVPVIVSNFNYFY. At 416-495 the chain is on the cytoplasmic side; sequence HRETEGEEQA…VNKSKLLTDV (80 aa). Phosphoserine occurs at positions 437 and 439. At serine 446 the chain carries Phosphoserine; by PKA. Residues 493–495 carry the PDZ-binding motif; the sequence is TDV.

This sequence belongs to the potassium channel family. A (Shaker) (TC 1.A.1.2) subfamily. Kv1.1/KCNA1 sub-subfamily. Homotetramer and heterotetramer with other channel-forming alpha subunits, such as KCNA2, KCNA4, KCNA5, KCNA6 and KCNA7. Channel activity is regulated by interaction with the beta subunits KCNAB1 and KCNAB2. Identified in a complex with KCNA2 and KCNAB2. Interacts (via C-terminus) with the PDZ domains of DLG1, DLG2 and DLG4. Interacts with LGI1 within a complex containing LGI1, KCNA4 and KCNAB1. Interacts (via cytoplasmic N-terminal domain) with KCNRG; this inhibits channel activity. Interacts with ANK3; this inhibits channel activity. Interacts (via N-terminus) with STX1A; this promotes channel inactivation. Interacts (via N-terminus) with the heterodimer formed by GNB1 and GNG2; this promotes channel inactivation. Can interact simultaneously with STX1A and the heterodimer formed by GNB1 and GNG2. Interacts with ADAM11. Palmitoylated on Cys-243; which may be required for membrane targeting. In terms of processing, N-glycosylated. Post-translationally, phosphorylated on tyrosine residues. Phosphorylation increases in response to NRG1; this inhibits channel activity. Phosphorylated by PKA. Phosphorylation at Ser-446 regulates channel activity by down-regulating expression at the cell membrane. Detected in hippocampus, in the middle third of the molecular layer of the dentate gyrus and in stratum radiatum and stratum oriens. Detected in the mossy fiber zone in the hippocampus CA3 region, at or near axon terminals. Detected in brain cortex, at basket cell terminals. Detected adjacent to nodes of Ranvier in juxtaparanodal zones in spinal cord nerve fibers, but also in paranodal regions in some myelinated spinal cord axons. Detected in juxtaparanodal regions adjacent to the nodes of Ranvier in myelinated axons in cerebellar white matter. Detected in sensory neurons. Detected in neurons from the medial nucleus of the trapezoid body. Detected in basolateral amygdala. Detected in the paraventricular nucleus of the hypothalamus. Detected in the islet of Langerhans (at protein level).

Its subcellular location is the cell membrane. The protein resides in the membrane. The protein localises to the cell projection. It localises to the axon. It is found in the cytoplasmic vesicle. Its subcellular location is the perikaryon. The protein resides in the endoplasmic reticulum. The protein localises to the dendrite. It localises to the cell junction. It is found in the synapse. Its subcellular location is the presynapse. The protein resides in the presynaptic cell membrane. It carries out the reaction K(+)(in) = K(+)(out). Its activity is regulated as follows. Inhibited by 4-aminopyridine (4-AP) and by tetraethylammonium (TEA). Inhibited by kaliotoxin (KTX). Functionally, voltage-gated potassium channel that mediates transmembrane potassium transport in excitable membranes, primarily in the brain and the central nervous system, but also in the kidney. Contributes to the regulation of the membrane potential and nerve signaling, and prevents neuronal hyperexcitability. Forms tetrameric potassium-selective channels through which potassium ions pass in accordance with their electrochemical gradient. The channel alternates between opened and closed conformations in response to the voltage difference across the membrane. Can form functional homotetrameric channels and heterotetrameric channels that contain variable proportions of KCNA1, KCNA2, KCNA4, KCNA5, KCNA6, KCNA7, and possibly other family members as well; channel properties depend on the type of alpha subunits that are part of the channel. Channel properties are modulated by cytoplasmic beta subunits that regulate the subcellular location of the alpha subunits and promote rapid inactivation of delayed rectifier potassium channels. In vivo, membranes probably contain a mixture of heteromeric potassium channel complexes, making it difficult to assign currents observed in intact tissues to any particular potassium channel family member. Homotetrameric KCNA1 forms a delayed-rectifier potassium channel that opens in response to membrane depolarization, followed by slow spontaneous channel closure. In contrast, a heterotetrameric channel formed by KCNA1 and KCNA4 shows rapid inactivation. Regulates neuronal excitability in hippocampus, especially in mossy fibers and medial perforant path axons, preventing neuronal hyperexcitability. Response to toxins that are selective for KCNA1, respectively for KCNA2, suggests that heteromeric potassium channels composed of both KCNA1 and KCNA2 play a role in pacemaking and regulate the output of deep cerebellar nuclear neurons. May function as down-stream effector for G protein-coupled receptors and inhibit GABAergic inputs to basolateral amygdala neurons. May contribute to the regulation of neurotransmitter release, such as gamma-aminobutyric acid (GABA) release. Plays a role in regulating the generation of action potentials and preventing hyperexcitability in myelinated axons of the vagus nerve, and thereby contributes to the regulation of heart contraction. Required for normal neuromuscular responses. Regulates the frequency of neuronal action potential firing in response to mechanical stimuli, and plays a role in the perception of pain caused by mechanical stimuli, but does not play a role in the perception of pain due to heat stimuli. Required for normal responses to auditory stimuli and precise location of sound sources, but not for sound perception. The use of toxins that block specific channels suggest that it contributes to the regulation of the axonal release of the neurotransmitter dopamine. Required for normal postnatal brain development and normal proliferation of neuronal precursor cells in the brain. Plays a role in the reabsorption of Mg(2+) in the distal convoluted tubules in the kidney and in magnesium ion homeostasis, probably via its effect on the membrane potential. This chain is Potassium voltage-gated channel subfamily A member 1, found in Rattus norvegicus (Rat).